The chain runs to 487 residues: GTPase Der (487 aa).

EngA-type G domains are found at residues 3–167 and 203–378; these read LTLA…DEME and LQVA…EVWN. GTP is bound by residues 9-16, 56-60, and 119-122; these read GRPNVGKS, DTAGL, and NKAE. The span at 167-190 shows a compositional bias: acidic residues; it reads EQQAEEQAPETDVDLDPEDEDGEE. The interval 167–191 is disordered; sequence EQQAEEQAPETDVDLDPEDEDGEEV. GTP contacts are provided by residues 209–216, 256–260, and 321–324; these read GRPNAGKS, DTAGM, and NKWD. The 87-residue stretch at 379-465 folds into the KH-like domain; the sequence is RRIPTAALNR…RLTLRGQGDK (87 aa). Residues 458–487 form a disordered region; that stretch reads TLRGQGDKNPYKGRRKKNAGALAKHLKSRG. Over residues 468–487 the composition is skewed to basic residues; sequence YKGRRKKNAGALAKHLKSRG.

Belongs to the TRAFAC class TrmE-Era-EngA-EngB-Septin-like GTPase superfamily. EngA (Der) GTPase family. As to quaternary structure, associates with the 50S ribosomal subunit.

Its function is as follows. GTPase that plays an essential role in the late steps of ribosome biogenesis. This chain is GTPase Der, found in Ruegeria pomeroyi (strain ATCC 700808 / DSM 15171 / DSS-3) (Silicibacter pomeroyi).